A 627-amino-acid polypeptide reads, in one-letter code: 1-deoxy-D-xylulose-5-phosphate synthase (627 aa).

Thiamine diphosphate is bound by residues His75 and 116-118; that span reads AHS. Asp147 provides a ligand contact to Mg(2+). Residues 148–149, Asn177, Tyr284, and Glu366 each bind thiamine diphosphate; that span reads GA. Asn177 serves as a coordination point for Mg(2+).

The protein belongs to the transketolase family. DXPS subfamily. In terms of assembly, homodimer. Requires Mg(2+) as cofactor. It depends on thiamine diphosphate as a cofactor.

The catalysed reaction is D-glyceraldehyde 3-phosphate + pyruvate + H(+) = 1-deoxy-D-xylulose 5-phosphate + CO2. It participates in metabolic intermediate biosynthesis; 1-deoxy-D-xylulose 5-phosphate biosynthesis; 1-deoxy-D-xylulose 5-phosphate from D-glyceraldehyde 3-phosphate and pyruvate: step 1/1. Its function is as follows. Catalyzes the acyloin condensation reaction between C atoms 2 and 3 of pyruvate and glyceraldehyde 3-phosphate to yield 1-deoxy-D-xylulose-5-phosphate (DXP). The chain is 1-deoxy-D-xylulose-5-phosphate synthase from Bordetella petrii (strain ATCC BAA-461 / DSM 12804 / CCUG 43448).